The chain runs to 341 residues: NADH-quinone oxidoreductase subunit H 1 (341 aa).

Transmembrane regions (helical) follow at residues 13–33 (LVVI…IAYI), 82–102 (GVFL…WAVI), 115–135 (VGVL…IMAG), 161–181 (IGFV…TAIV), 190–210 (LLGW…VSAL), 248–268 (YVAI…GWLP), 277–297 (WVPG…LFAM), and 317–337 (VFLP…QFAG).

This sequence belongs to the complex I subunit 1 family. In terms of assembly, NDH-1 is composed of 14 different subunits. Subunits NuoA, H, J, K, L, M, N constitute the membrane sector of the complex.

The protein resides in the cell inner membrane. The enzyme catalyses a quinone + NADH + 5 H(+)(in) = a quinol + NAD(+) + 4 H(+)(out). NDH-1 shuttles electrons from NADH, via FMN and iron-sulfur (Fe-S) centers, to quinones in the respiratory chain. The immediate electron acceptor for the enzyme in this species is believed to be ubiquinone. Couples the redox reaction to proton translocation (for every two electrons transferred, four hydrogen ions are translocated across the cytoplasmic membrane), and thus conserves the redox energy in a proton gradient. This subunit may bind ubiquinone. The polypeptide is NADH-quinone oxidoreductase subunit H 1 (Rhodopseudomonas palustris (strain BisB18)).